Reading from the N-terminus, the 352-residue chain is tRNA pseudouridine synthase D (352 aa).

The active-site Nucleophile is the D81. Residues 157–303 (GVPNYFGLQR…MAHERRILRL (147 aa)) enclose the TRUD domain.

The protein belongs to the pseudouridine synthase TruD family.

It carries out the reaction uridine(13) in tRNA = pseudouridine(13) in tRNA. In terms of biological role, responsible for synthesis of pseudouridine from uracil-13 in transfer RNAs. This Ectopseudomonas mendocina (strain ymp) (Pseudomonas mendocina) protein is tRNA pseudouridine synthase D.